We begin with the raw amino-acid sequence, 361 residues long: Cobalt-precorrin-5B C(1)-methyltransferase (361 aa).

The protein belongs to the CbiD family.

It catalyses the reaction Co-precorrin-5B + S-adenosyl-L-methionine = Co-precorrin-6A + S-adenosyl-L-homocysteine. It functions in the pathway cofactor biosynthesis; adenosylcobalamin biosynthesis; cob(II)yrinate a,c-diamide from sirohydrochlorin (anaerobic route): step 6/10. Catalyzes the methylation of C-1 in cobalt-precorrin-5B to form cobalt-precorrin-6A. The chain is Cobalt-precorrin-5B C(1)-methyltransferase from Methanobrevibacter smithii (strain ATCC 35061 / DSM 861 / OCM 144 / PS).